Consider the following 98-residue polypeptide: NADH-ubiquinone oxidoreductase chain 4L (98 aa).

The next 3 helical transmembrane spans lie at 1 to 21 (MPIIYMNIMLAFTISLLGMLT), 29 to 49 (SLLCLEGMMLSLFIMSTLMAL), and 58 to 78 (IVPIALLVFAACEAAVGLSLL).

Belongs to the complex I subunit 4L family. Core subunit of respiratory chain NADH dehydrogenase (Complex I) which is composed of 45 different subunits.

The protein resides in the mitochondrion inner membrane. The catalysed reaction is a ubiquinone + NADH + 5 H(+)(in) = a ubiquinol + NAD(+) + 4 H(+)(out). Core subunit of the mitochondrial membrane respiratory chain NADH dehydrogenase (Complex I) which catalyzes electron transfer from NADH through the respiratory chain, using ubiquinone as an electron acceptor. Part of the enzyme membrane arm which is embedded in the lipid bilayer and involved in proton translocation. This chain is NADH-ubiquinone oxidoreductase chain 4L (MT-ND4L), found in Presbytis melalophos (Mitred leaf monkey).